The following is a 716-amino-acid chain: Penicillin-binding protein 2A (716 aa).

A helical membrane pass occupies residues 22–42 (LNILFLAAFVIFTWIIVELGI). Serine 397 serves as the catalytic Acyl-ester intermediate. Basic and acidic residues predominate over residues 689-706 (SKQDKEGTQQKNKDKIEE). A disordered region spans residues 689 to 716 (SKQDKEGTQQKNKDKIEENAENTTSSDN).

Belongs to the transpeptidase family.

Its subcellular location is the cell membrane. The protein localises to the forespore inner membrane. It catalyses the reaction Preferential cleavage: (Ac)2-L-Lys-D-Ala-|-D-Ala. Also transpeptidation of peptidyl-alanyl moieties that are N-acyl substituents of D-alanine.. It functions in the pathway cell wall biogenesis; peptidoglycan biosynthesis. Its function is as follows. Involved in the synthesis of peptidoglycan associated with cell wall elongation, especially following spore germination. Has a partially redundant function with PBP 1 (ponA) or PBP 4 (pbpD) during spore outgrowth. Plays a redundant role with PbpH in determining the rod shape of the cell during vegetative growth and spore outgrowth. In Bacillus subtilis (strain 168), this protein is Penicillin-binding protein 2A.